The primary structure comprises 568 residues: Oxygen-dependent choline dehydrogenase (568 aa).

Residue 8-37 (DYIIIGAGSAGNTLAARLTEDAGVTVLLLE) participates in FAD binding. The active-site Proton acceptor is His-477.

The protein belongs to the GMC oxidoreductase family. The cofactor is FAD.

It catalyses the reaction choline + A = betaine aldehyde + AH2. It carries out the reaction betaine aldehyde + NAD(+) + H2O = glycine betaine + NADH + 2 H(+). It participates in amine and polyamine biosynthesis; betaine biosynthesis via choline pathway; betaine aldehyde from choline (cytochrome c reductase route): step 1/1. In terms of biological role, involved in the biosynthesis of the osmoprotectant glycine betaine. Catalyzes the oxidation of choline to betaine aldehyde and betaine aldehyde to glycine betaine at the same rate. The sequence is that of Oxygen-dependent choline dehydrogenase from Pseudomonas syringae pv. tomato (strain ATCC BAA-871 / DC3000).